A 196-amino-acid polypeptide reads, in one-letter code: UPF0215 protein MA_4269 (196 aa).

The protein belongs to the UPF0215 family.

In Methanosarcina acetivorans (strain ATCC 35395 / DSM 2834 / JCM 12185 / C2A), this protein is UPF0215 protein MA_4269.